Reading from the N-terminus, the 260-residue chain is Triosephosphate isomerase (260 aa).

A substrate-binding site is contributed by 11 to 13 (NWK). The active-site Electrophile is His103. Glu175 (proton acceptor) is an active-site residue. Substrate contacts are provided by residues Gly181, Ser220, and 241-242 (GG).

This sequence belongs to the triosephosphate isomerase family. Homodimer.

Its subcellular location is the cytoplasm. It carries out the reaction D-glyceraldehyde 3-phosphate = dihydroxyacetone phosphate. It functions in the pathway carbohydrate biosynthesis; gluconeogenesis. The protein operates within carbohydrate degradation; glycolysis; D-glyceraldehyde 3-phosphate from glycerone phosphate: step 1/1. Involved in the gluconeogenesis. Catalyzes stereospecifically the conversion of dihydroxyacetone phosphate (DHAP) to D-glyceraldehyde-3-phosphate (G3P). This Shewanella denitrificans (strain OS217 / ATCC BAA-1090 / DSM 15013) protein is Triosephosphate isomerase.